Consider the following 105-residue polypeptide: Small ribosomal subunit protein uS17 (105 aa).

This sequence belongs to the universal ribosomal protein uS17 family. Part of the 30S ribosomal subunit. Contacts protein S12.

Functionally, one of the primary rRNA binding proteins, it binds directly to 16S rRNA where it helps nucleate assembly of the platform and body of the 30S subunit by bringing together and stabilizing interactions between several different RNA helices. The combined cluster of proteins S8, S12 and S17 appears to hold together the shoulder and platform of the 30S subunit. The protein is Small ribosomal subunit protein uS17 of Thermus thermophilus (strain ATCC 27634 / DSM 579 / HB8).